A 199-amino-acid polypeptide reads, in one-letter code: Ion-translocating oxidoreductase complex subunit A (199 aa).

The next 6 membrane-spanning stretches (helical) occupy residues 8-28 (LFTIFLEGVFIKNFLLIQFLG), 49-69 (VVFVMAMAATVSFALYNFILV), 75-95 (FLRTIAFIVVIAALVQLVEFI), 106-126 (SLGIYLPLITTNCAVLGAVLL), 138-158 (VVFGVAAGLGYTVAMLMMAAI), and 178-198 (AFFIATIMSMSFVNFFGVIPL).

The protein belongs to the NqrDE/RnfAE family. In terms of assembly, the Rnf complex is probably composed of eight subunits, including RnfA, RnfB, RnfC, RnfD, RnfE and RnfG.

Its subcellular location is the cell membrane. Functionally, part of a membrane-bound complex that couples electron transfer with translocation of ions across the membrane. Catalyzes Na(+) transport, most probably coupled to electron transfer from reduced ferredoxin to methanophenazine and heterodisulfide reductase. Involved in heterodisulfide reduction during methanogenesis from acetate. The polypeptide is Ion-translocating oxidoreductase complex subunit A (Methanosarcina acetivorans (strain ATCC 35395 / DSM 2834 / JCM 12185 / C2A)).